The primary structure comprises 609 residues: Kelch-like protein 20 (609 aa).

In terms of domain architecture, BTB spans 68-135; sequence CDVVLVVGAK…AYTSQITVEE (68 aa). The BACK domain occupies 170–272; sequence CLGIRAFADT…SPKFLVGTVG (103 aa). Kelch repeat units lie at residues 319 to 365, 367 to 413, 414 to 460, 462 to 507, 509 to 554, and 556 to 601; these read VLFA…VLDD, LYAV…VLGG, FLYA…VLGG, LYAV…VYQD, IYAV…VVNG, and LMAV…VIKM.

As to quaternary structure, component of the BCR(KLHL20) E3 ubiquitin ligase complex, at least composed of CUL3, KLHL20 and RBX1. Interacts with PDZ-RhoGEF/ARHGEF11, DAPK1, PML and CORO7. Interacts with F-actin. Interacts with IFN-gamma (IFNG). Interacts (via kelch repeats) with IVNS1ABP (via kelch repeats); this interaction blocks the assembly of CUL3-KLHL20 complex.

It is found in the cytoplasm. It localises to the perinuclear region. Its subcellular location is the nucleus. The protein localises to the golgi apparatus. The protein resides in the trans-Golgi network. It is found in the cell projection. It localises to the axon. Its subcellular location is the dendrite. It functions in the pathway protein modification; protein ubiquitination. Functionally, substrate-specific adapter of a BCR (BTB-CUL3-RBX1) E3 ubiquitin-protein ligase complex involved in interferon response and anterograde Golgi to endosome transport. The BCR(KLHL20) E3 ubiquitin ligase complex mediates the ubiquitination of DAPK1, leading to its degradation by the proteasome, thereby acting as a negative regulator of apoptosis. The BCR(KLHL20) E3 ubiquitin ligase complex also specifically mediates 'Lys-33'-linked ubiquitination. Involved in anterograde Golgi to endosome transport by mediating 'Lys-33'-linked ubiquitination of CORO7, promoting interaction between CORO7 and EPS15, thereby facilitating actin polymerization and post-Golgi trafficking. Also acts as a regulator of endothelial migration during angiogenesis by controlling the activation of Rho GTPases. The BCR(KLHL20) E3 ubiquitin ligase complex acts as a regulator of neurite outgrowth by mediating ubiquitination and degradation of PDZ-RhoGEF/ARHGEF11. The polypeptide is Kelch-like protein 20 (KLHL20) (Bos taurus (Bovine)).